Consider the following 159-residue polypeptide: Ribosomal RNA large subunit methyltransferase H (159 aa).

Residues Leu-76, Gly-107, and Leu-126 to Met-131 contribute to the S-adenosyl-L-methionine site.

This sequence belongs to the RNA methyltransferase RlmH family. As to quaternary structure, homodimer.

Its subcellular location is the cytoplasm. It carries out the reaction pseudouridine(1915) in 23S rRNA + S-adenosyl-L-methionine = N(3)-methylpseudouridine(1915) in 23S rRNA + S-adenosyl-L-homocysteine + H(+). In terms of biological role, specifically methylates the pseudouridine at position 1915 (m3Psi1915) in 23S rRNA. The chain is Ribosomal RNA large subunit methyltransferase H from Acinetobacter baumannii (strain SDF).